The following is a 270-amino-acid chain: Phthiotriol/phenolphthiotriol dimycocerosates methyltransferase (270 aa).

This sequence belongs to the methyltransferase superfamily. Phthiotriol/phenolphthiotriol dimycocerosates methyltransferase family.

Its function is as follows. Catalyzes the methylation of the lipid moiety of the intermediate compounds phthiotriol and glycosylated phenolphthiotriol dimycoserosates to form phthiocerol dimycocerosates (DIM A) and glycosylated phenolphthiocerol dimycocerosates (PGL). The protein is Phthiotriol/phenolphthiotriol dimycocerosates methyltransferase of Mycobacterium leprae (strain TN).